The chain runs to 370 residues: Peptide chain release factor 1 (370 aa).

Gln231 is subject to N5-methylglutamine. The segment covering 284 to 293 (AREERERETR) has biased composition (basic and acidic residues). Residues 284 to 303 (AREERERETRAAQVGTGERS) are disordered.

This sequence belongs to the prokaryotic/mitochondrial release factor family. Methylated by PrmC. Methylation increases the termination efficiency of RF1.

It is found in the cytoplasm. In terms of biological role, peptide chain release factor 1 directs the termination of translation in response to the peptide chain termination codons UAG and UAA. The sequence is that of Peptide chain release factor 1 from Deinococcus geothermalis (strain DSM 11300 / CIP 105573 / AG-3a).